The sequence spans 355 residues: uncharacterized protein (355 aa).

A run of 3 helical transmembrane segments spans residues 275-295, 301-321, and 330-350; these read SLIV…FVAF, WNSI…VVGV, and IAST…PLAL.

The protein to M.tuberculosis Rv0497.

It localises to the cell membrane. This is an uncharacterized protein from Mycobacterium leprae (strain TN).